Consider the following 1380-residue polypeptide: DNA-directed RNA polymerase subunit beta (1380 aa).

Belongs to the RNA polymerase beta chain family. In terms of assembly, the RNAP catalytic core consists of 2 alpha, 1 beta, 1 beta' and 1 omega subunit. When a sigma factor is associated with the core the holoenzyme is formed, which can initiate transcription.

It catalyses the reaction RNA(n) + a ribonucleoside 5'-triphosphate = RNA(n+1) + diphosphate. Functionally, DNA-dependent RNA polymerase catalyzes the transcription of DNA into RNA using the four ribonucleoside triphosphates as substrates. The chain is DNA-directed RNA polymerase subunit beta from Ehrlichia canis (strain Jake).